The sequence spans 284 residues: Pseudopaline exporter CntI (284 aa).

10 consecutive transmembrane segments (helical) span residues 2–22 (VLDL…TFSV), 34–54 (LPAA…IYLL), 74–94 (GVMG…IPLA), 96–116 (ASIL…LFLG), 122–142 (AVYW…KPFS), 147–167 (SVYA…SVAI), 179–199 (IVFY…WNDF), 209–229 (GLLL…TRAF), 236–256 (IVAV…WLFW), and 259–279 (VPDA…IALS). EamA domains are found at residues 8-138 (SGVL…LMIV) and 151-279 (VVGL…IALS).

Belongs to the EamA transporter family.

It is found in the cell inner membrane. Transports the metallophore pseudopaline, which is involved in the acquisition of nickel and zinc, and thus enables bacterial growth inside the host, where metal access is limited. Is probably involved in the export of pseudopaline. Essential for iron acquisition during the interaction with airway mucus secretions (AMS). This is Pseudopaline exporter CntI from Pseudomonas aeruginosa (strain ATCC 15692 / DSM 22644 / CIP 104116 / JCM 14847 / LMG 12228 / 1C / PRS 101 / PAO1).